The following is a 260-amino-acid chain: Outer membrane protein assembly factor BamD (260 aa).

Positions 1–19 (MRKLKSFTFIALTAFAITA) are cleaved as a signal peptide. Cysteine 20 is lipidated: N-palmitoyl cysteine. Cysteine 20 carries S-diacylglycerol cysteine lipidation.

The protein belongs to the BamD family. As to quaternary structure, part of the Bam complex.

The protein localises to the cell outer membrane. Functionally, part of the outer membrane protein assembly complex, which is involved in assembly and insertion of beta-barrel proteins into the outer membrane. The chain is Outer membrane protein assembly factor BamD from Pasteurella multocida (strain Pm70).